The following is a 238-amino-acid chain: ATP-dependent Clp protease proteolytic subunit 4 (238 aa).

The active-site Nucleophile is Ser-113. His-138 is a catalytic residue.

The protein belongs to the peptidase S14 family. Fourteen ClpP subunits assemble into 2 heptameric rings which stack back to back to give a disk-like structure with a central cavity, resembling the structure of eukaryotic proteasomes.

The protein localises to the cytoplasm. The catalysed reaction is Hydrolysis of proteins to small peptides in the presence of ATP and magnesium. alpha-casein is the usual test substrate. In the absence of ATP, only oligopeptides shorter than five residues are hydrolyzed (such as succinyl-Leu-Tyr-|-NHMec, and Leu-Tyr-Leu-|-Tyr-Trp, in which cleavage of the -Tyr-|-Leu- and -Tyr-|-Trp bonds also occurs).. In terms of biological role, cleaves peptides in various proteins in a process that requires ATP hydrolysis. Has a chymotrypsin-like activity. Plays a major role in the degradation of misfolded proteins. The protein is ATP-dependent Clp protease proteolytic subunit 4 of Frankia casuarinae (strain DSM 45818 / CECT 9043 / HFP020203 / CcI3).